The sequence spans 273 residues: Undecaprenyl-diphosphatase (273 aa).

Transmembrane regions (helical) follow at residues 13 to 35, 45 to 62, 82 to 102, 108 to 128, 186 to 206, 219 to 239, and 250 to 270; these read GLVEGFTEFLPISSTGHLIVFGN, VFEIAIQLGAVLAVVFEY, FVLNLAIAFIPAAVMGLLFDK, LFNPLSVAVMLVLGGFFILWV, TEFSFFLAVPMMVAATAYDVL, LILIGFIAAFVSGLVAVKALL, and FAYYRIVFGIVIIILWLSGWI.

Belongs to the UppP family.

It localises to the cell inner membrane. It catalyses the reaction di-trans,octa-cis-undecaprenyl diphosphate + H2O = di-trans,octa-cis-undecaprenyl phosphate + phosphate + H(+). Its function is as follows. Catalyzes the dephosphorylation of undecaprenyl diphosphate (UPP). Confers resistance to bacitracin. In Neisseria gonorrhoeae (strain NCCP11945), this protein is Undecaprenyl-diphosphatase.